The chain runs to 62 residues: Cytotoxin 6 (62 aa).

An N-terminal signal peptide occupies residues 1 to 2 (YT). Cystine bridges form between Cys5-Cys23, Cys16-Cys40, Cys44-Cys55, and Cys56-Cys61.

It belongs to the three-finger toxin family. Short-chain subfamily. Type IA cytotoxin sub-subfamily. In terms of assembly, monomer in solution; Homodimer and oligomer in the presence of negatively charged lipids forming a pore with a size ranging between 20 and 30 Angstroms. Expressed by the venom gland.

The protein resides in the secreted. It is found in the target cell membrane. Functionally, shows cytolytic activity on many different cells by forming pore in lipid membranes. In vivo, increases heart rate or kills the animal by cardiac arrest. In addition, it binds to heparin with high affinity, interacts with Kv channel-interacting protein 1 (KCNIP1) in a calcium-independent manner, and binds to integrin alpha-V/beta-3 (ITGAV/ITGB3) with moderate affinity. The chain is Cytotoxin 6 from Naja sputatrix (Malayan spitting cobra).